Consider the following 413-residue polypeptide: Extracellular sucrase (413 aa).

Catalysis depends on D44, which acts as the Nucleophile. Residue E276 is the Proton donor/acceptor of the active site.

Belongs to the glycosyl hydrolase 68 family.

It is found in the secreted. It carries out the reaction Hydrolysis of terminal non-reducing beta-D-fructofuranoside residues in beta-D-fructofuranosides.. The polypeptide is Extracellular sucrase (sacC) (Zymomonas mobilis subsp. mobilis (strain ATCC 10988 / DSM 424 / LMG 404 / NCIMB 8938 / NRRL B-806 / ZM1)).